The following is a 122-amino-acid chain: MIKKESRNERRIRRHRRVRKKVFGTPERPRLCVFRSNKHIYAQIIDDTIGHTLVSASTLDPELREKLQKTWNIEAAKEVGLLIGKRAIEKGIKKVVFDRGGYKYHGRVKALADGAREAGLEF.

This sequence belongs to the universal ribosomal protein uL18 family. As to quaternary structure, part of the 50S ribosomal subunit; part of the 5S rRNA/L5/L18/L25 subcomplex. Contacts the 5S and 23S rRNAs.

In terms of biological role, this is one of the proteins that bind and probably mediate the attachment of the 5S RNA into the large ribosomal subunit, where it forms part of the central protuberance. The sequence is that of Large ribosomal subunit protein uL18 from Thermotoga neapolitana (strain ATCC 49049 / DSM 4359 / NBRC 107923 / NS-E).